The chain runs to 823 residues: Degenerin-like protein asic-1 (823 aa).

Topologically, residues methionine 1 to tyrosine 38 are cytoplasmic. A helical transmembrane segment spans residues methionine 39–valine 59. The Extracellular portion of the chain corresponds to glutamate 60–glycine 767. Disulfide bonds link cysteine 86-cysteine 518 and cysteine 494-cysteine 501. N-linked (GlcNAc...) asparagine glycans are attached at residues asparagine 228, asparagine 326, asparagine 347, asparagine 415, and asparagine 486. N-linked (GlcNAc...) asparagine glycosylation is found at asparagine 527 and asparagine 546. 4 disulfide bridges follow: cysteine 604-cysteine 687, cysteine 625-cysteine 683, cysteine 629-cysteine 681, and cysteine 638-cysteine 664. A GAS motif; ion selectivity filter motif is present at residues glycine 767 to serine 769. Residues valine 768 to isoleucine 788 form a helical membrane-spanning segment. The Cytoplasmic portion of the chain corresponds to serine 789 to arginine 795.

This sequence belongs to the amiloride-sensitive sodium channel (TC 1.A.6) family. As to quaternary structure, homotrimer. Heterotrimer; with other ASIC proteins producing channel with different properties.

The protein resides in the cell membrane. It localises to the postsynaptic cell membrane. The protein localises to the cell projection. It is found in the dendrite. The enzyme catalyses Na(+)(in) = Na(+)(out). The catalysed reaction is K(+)(in) = K(+)(out). It catalyses the reaction Li(+)(in) = Li(+)(out). It carries out the reaction Ca(2+)(in) = Ca(2+)(out). In terms of biological role, forms voltage-independent, pH-gated trimeric sodium channels that act as postsynaptic excitatory receptors in the nervous system, playing a crucial role in regulating synaptic plasticity, learning, and memory. Promotes synaptic vesicle fusion to positively regulate the release of dopamine at dopaminergic neuron synapses. Displays high selectivity for sodium ions but can also permit the permeation of other cations. This Caenorhabditis elegans protein is Degenerin-like protein asic-1.